The sequence spans 563 residues: Septation ring formation regulator EzrA (563 aa).

Residues 1-2 are Extracellular-facing; sequence ME. A helical membrane pass occupies residues 3 to 21; sequence LVIGLLVILLALFAAGYFF. At 22-563 the chain is on the cytoplasmic side; the sequence is RKKIYTEIDR…KKIKADQSAS (542 aa). Coiled coils occupy residues 133–159, 243–276, and 309–529; these read EEKS…AYSH, KGYK…ELDV, and SKMP…ERLF.

It belongs to the EzrA family.

Its subcellular location is the cell membrane. Functionally, negative regulator of FtsZ ring formation; modulates the frequency and position of FtsZ ring formation. Inhibits FtsZ ring formation at polar sites. Interacts either with FtsZ or with one of its binding partners to promote depolymerization. The chain is Septation ring formation regulator EzrA from Bacillus velezensis (strain DSM 23117 / BGSC 10A6 / LMG 26770 / FZB42) (Bacillus amyloliquefaciens subsp. plantarum).